Here is a 317-residue protein sequence, read N- to C-terminus: Transaldolase (317 aa).

Lys-132 (schiff-base intermediate with substrate) is an active-site residue.

It belongs to the transaldolase family. Type 1 subfamily. Homodimer.

The protein localises to the cytoplasm. The enzyme catalyses D-sedoheptulose 7-phosphate + D-glyceraldehyde 3-phosphate = D-erythrose 4-phosphate + beta-D-fructose 6-phosphate. It participates in carbohydrate degradation; pentose phosphate pathway; D-glyceraldehyde 3-phosphate and beta-D-fructose 6-phosphate from D-ribose 5-phosphate and D-xylulose 5-phosphate (non-oxidative stage): step 2/3. Functionally, transaldolase is important for the balance of metabolites in the pentose-phosphate pathway. This is Transaldolase from Actinobacillus succinogenes (strain ATCC 55618 / DSM 22257 / CCUG 43843 / 130Z).